A 537-amino-acid polypeptide reads, in one-letter code: Protein ST7 homolog (537 aa).

A helical membrane pass occupies residues 15 to 35 (FYVALTGTSSLISGLILIFEW). A disordered region spans residues 61–111 (SDGQSESSNGSGSSSSSGSSSSSNGGAGGGGSGGAGASGSGSATTSTGTQM). The segment covering 67 to 84 (SSNGSGSSSSSGSSSSSN) has biased composition (low complexity). The span at 85–99 (GGAGGGGSGGAGASG) shows a compositional bias: gly residues. Residues 100–109 (SGSATTSTGT) show a composition bias toward low complexity. Residues 472–492 (LPFFILFTAGLCSITALLALA) traverse the membrane as a helical segment.

This sequence belongs to the ST7 family.

It is found in the membrane. The chain is Protein ST7 homolog from Drosophila melanogaster (Fruit fly).